The chain runs to 505 residues: Probable cytosol aminopeptidase (505 aa).

Mn(2+)-binding residues include lysine 269 and aspartate 274. Lysine 281 is a catalytic residue. Residues aspartate 292, aspartate 351, and glutamate 353 each coordinate Mn(2+). Arginine 355 is a catalytic residue.

Belongs to the peptidase M17 family. Mn(2+) is required as a cofactor.

The protein localises to the cytoplasm. It carries out the reaction Release of an N-terminal amino acid, Xaa-|-Yaa-, in which Xaa is preferably Leu, but may be other amino acids including Pro although not Arg or Lys, and Yaa may be Pro. Amino acid amides and methyl esters are also readily hydrolyzed, but rates on arylamides are exceedingly low.. It catalyses the reaction Release of an N-terminal amino acid, preferentially leucine, but not glutamic or aspartic acids.. Its function is as follows. Presumably involved in the processing and regular turnover of intracellular proteins. Catalyzes the removal of unsubstituted N-terminal amino acids from various peptides. In Rhodococcus opacus (strain B4), this protein is Probable cytosol aminopeptidase.